Consider the following 644-residue polypeptide: Exoribonuclease 2 (644 aa).

The region spanning 189–516 (RQDLTALNFV…NHRLLKAVIK (328 aa)) is the RNB domain. In terms of domain architecture, S1 motif spans 561–643 (NTRFAAEIID…ETRSIIARPA (83 aa)).

This sequence belongs to the RNR ribonuclease family. RNase II subfamily.

The protein resides in the cytoplasm. It catalyses the reaction Exonucleolytic cleavage in the 3'- to 5'-direction to yield nucleoside 5'-phosphates.. Its function is as follows. Involved in mRNA degradation. Hydrolyzes single-stranded polyribonucleotides processively in the 3' to 5' direction. The chain is Exoribonuclease 2 from Salmonella enteritidis PT4 (strain P125109).